The primary structure comprises 252 residues: Serine/threonine phosphatase stp (252 aa).

A disordered region spans residues 1–22 (MHAEFRTDRGRIRHHNEDNGGV). In terms of domain architecture, PPM-type phosphatase spans 2–242 (HAEFRTDRGR…DNITVLLVER (241 aa)). The Mn(2+) site is built by Asp36, Gly37, Asp194, and Asp233.

The protein belongs to the PP2C family. Mn(2+) serves as cofactor.

The protein localises to the cytoplasm. The protein resides in the membrane. The enzyme catalyses O-phospho-L-seryl-[protein] + H2O = L-seryl-[protein] + phosphate. It catalyses the reaction O-phospho-L-threonyl-[protein] + H2O = L-threonyl-[protein] + phosphate. In terms of biological role, protein phosphatase that dephosphorylates EF-Tu. In Listeria innocua serovar 6a (strain ATCC BAA-680 / CLIP 11262), this protein is Serine/threonine phosphatase stp (stp).